The primary structure comprises 404 residues: Formate-dependent phosphoribosylglycinamide formyltransferase (404 aa).

Residues 25–26 (EL) and Glu-85 each bind N(1)-(5-phospho-beta-D-ribosyl)glycinamide. ATP contacts are provided by residues Arg-118, Lys-159, 164-169 (SSGKGQ), 199-202 (EGFI), and Glu-207. The ATP-grasp domain maps to 123 to 318 (RLAAEELGLP…EFELHARAIL (196 aa)). Mg(2+)-binding residues include Glu-277 and Glu-289. N(1)-(5-phospho-beta-D-ribosyl)glycinamide is bound by residues Asp-296, Lys-365, and 372–373 (RR). The interval 384–404 (TDEARSRAKQAAAAVRPVSAK) is disordered. Residues 392–404 (KQAAAAVRPVSAK) are compositionally biased toward low complexity.

The protein belongs to the PurK/PurT family. As to quaternary structure, homodimer.

It catalyses the reaction N(1)-(5-phospho-beta-D-ribosyl)glycinamide + formate + ATP = N(2)-formyl-N(1)-(5-phospho-beta-D-ribosyl)glycinamide + ADP + phosphate + H(+). It functions in the pathway purine metabolism; IMP biosynthesis via de novo pathway; N(2)-formyl-N(1)-(5-phospho-D-ribosyl)glycinamide from N(1)-(5-phospho-D-ribosyl)glycinamide (formate route): step 1/1. Involved in the de novo purine biosynthesis. Catalyzes the transfer of formate to 5-phospho-ribosyl-glycinamide (GAR), producing 5-phospho-ribosyl-N-formylglycinamide (FGAR). Formate is provided by PurU via hydrolysis of 10-formyl-tetrahydrofolate. The protein is Formate-dependent phosphoribosylglycinamide formyltransferase of Paraburkholderia xenovorans (strain LB400).